The following is a 74-amino-acid chain: Antimicrobial peptide 2 (74 aa).

Positions 1–22 are cleaved as a signal peptide; it reads MEIKYLLTVFLVLLIVSDHCQA. Lys-40 carries the lysine amide modification. Positions 46 to 74 are excised as a propeptide; sequence DLDGQIDRSRNFRKRDAELEELLSKLPIY.

Expressed by the venom gland.

The protein localises to the secreted. The protein resides in the target cell membrane. Has antibacterial activity against the Gram-positive bacteria S.aureus (MIC=48 uM), the Gram-negative bacteria E.coli (MIC=120 uM), and the yeast C.albicans (MIC=64 uM). Causes hemolysis on horse erythrocytes. The polypeptide is Antimicrobial peptide 2 (Androctonus amoreuxi (African fattail scorpion)).